The following is a 157-amino-acid chain: NAD(P)H-quinone oxidoreductase subunit N (157 aa).

Belongs to the complex I NdhN subunit family. As to quaternary structure, NDH-1 can be composed of about 15 different subunits; different subcomplexes with different compositions have been identified which probably have different functions.

The protein resides in the cellular thylakoid membrane. It carries out the reaction a plastoquinone + NADH + (n+1) H(+)(in) = a plastoquinol + NAD(+) + n H(+)(out). The enzyme catalyses a plastoquinone + NADPH + (n+1) H(+)(in) = a plastoquinol + NADP(+) + n H(+)(out). In terms of biological role, NDH-1 shuttles electrons from an unknown electron donor, via FMN and iron-sulfur (Fe-S) centers, to quinones in the respiratory and/or the photosynthetic chain. The immediate electron acceptor for the enzyme in this species is believed to be plastoquinone. Couples the redox reaction to proton translocation, and thus conserves the redox energy in a proton gradient. Cyanobacterial NDH-1 also plays a role in inorganic carbon-concentration. This is NAD(P)H-quinone oxidoreductase subunit N from Synechococcus sp. (strain CC9902).